A 610-amino-acid chain; its full sequence is MMDGASPVDRDVSPVGLPKKRIKQNHDQVFLHNLPDAPRYTKSYMHNAEIYKCFPTKSNYILSVSYDGYVKFWHKTPNGVEYIKEFHAHNAMLLSAELSQDERLFITGADDKSLKVFDVESIDLVNIIDLEFLPKAICCFNSPSLKTSLIAVSSAESPLIFFFESGGDGEVLYTVKKHTAPVHCLRYLSTLDCFLSIDIGGMVEYWSPEEPFQKPDTAELFNMKSQTDLYIFKKQKSVPTSLEVSHFENFWSTISYPDCKVRVFDTKSGRAILELDENPSNAAKKVEALFEKEDTESSYYMSHVELGRRIAIERDIEKHGLTVGTTAIFDESEKYLLYGSIVGIKVVSIDNGTVVRIYGKDEAVRFTRLSLYQQAPKKSNLPSLDVIASNNPLVEESFQKDPTLFATAWKKQRFYLFSNMSTKFTLSDRDVYNEQVLPVTNNEGRQENGNILLGKAAIIHTTQGDISIKLYPEEAPKAVQNFTTHAENGYYDNTIFHRIIKNFMIQGGDPLGDGTGGESIWKKDFEDEISPNLKHDRPFTVSMANSGPNTNGSQFFITTDLTPWLDGKHTIFARAYAGLDVVHRIEQGETDKYDRPLEPTKIINISIVYT.

At Ser13 the chain carries Phosphoserine. WD repeat units follow at residues 45–83, 88–127, and 177–216; these read MHNAEIYKCFPTKSNYILSVSYDGYVKFWHKTPNGVEYI, AHNAMLLSAELSQDERLFITGADDKSLKVFDVESIDLVNI, and KHTAPVHCLRYLSTLDCFLSIDIGGMVEYWSPEEPFQKPD. The PPIase cyclophilin-type domain maps to 453–607; it reads LGKAAIIHTT…EPTKIINISI (155 aa).

It belongs to the cyclophilin-type PPIase family.

The protein resides in the nucleus. The catalysed reaction is [protein]-peptidylproline (omega=180) = [protein]-peptidylproline (omega=0). In terms of biological role, PPIases accelerate the folding of proteins. It catalyzes the cis-trans isomerization of proline imidic peptide bonds in oligopeptides. The chain is Peptidyl-prolyl cis-trans isomerase 9 (cyp9) from Schizosaccharomyces pombe (strain 972 / ATCC 24843) (Fission yeast).